Here is a 299-residue protein sequence, read N- to C-terminus: MKIYVVATIAWILLQFSAWTTTDAVTSITLDLVNPTAGQYSSFVDKIRNNVKDPNLKYGGTDIAVIGPPSKEKFLRINFQSSRGTVSLGLKRDNLYVVAYLAMDNTNVNRAYYFRSEITSAESTALFPEATTANQKALEYTEDYQSIEKNAQITQGDQSRKELGLGIDLLSTSMEAVNKKARVVKDEARFLLIAIQMTAEAARFRYIQNLVIKNFPNKFNSENKVIQFEVNWKKISTAIYGDAKNGVFNKDYDFGFGKVRQVKDLQMGLLMYLGKPKSSNEANSTVRHYGPLKPTLLIT.

The first 24 residues, 1–24 (MKIYVVATIAWILLQFSAWTTTDA), serve as a signal peptide directing secretion. Residue glutamate 200 is part of the active site. Positions 278-299 (SSNEANSTVRHYGPLKPTLLIT) are excised as a propeptide. An N-linked (GlcNAc...) asparagine glycan is attached at asparagine 283.

The protein belongs to the ribosome-inactivating protein family. Type 1 RIP subfamily. In terms of tissue distribution, seeds and leaves of the plant.

It carries out the reaction Endohydrolysis of the N-glycosidic bond at one specific adenosine on the 28S rRNA.. In terms of biological role, ribosome-inactivating protein of type 1, inhibits protein synthesis in animal cells. Useful as immunotoxin for pharmacological applications. The sequence is that of Ribosome-inactivating protein saporin-6 (SAP6) from Saponaria officinalis (Common soapwort).